The chain runs to 115 residues: Large ribosomal subunit protein P2 (115 aa).

N-acetylmethionine is present on Met1. A phosphoserine mark is found at Ser17 and Ser19. Residue Lys21 is modified to N6-acetyllysine; alternate. At Lys21 the chain carries N6-succinyllysine; alternate. The span at 76–90 (APGSAAPAAGSAPAA) shows a compositional bias: low complexity. The segment at 76-115 (APGSAAPAAGSAPAAAEERKEEKKEESEESDDDMGFGLFD) is disordered. Phosphoserine is present on residues Ser79 and Ser86. A compositionally biased stretch (basic and acidic residues) spans 91–101 (AEERKEEKKEE). 2 positions are modified to phosphoserine: Ser102 and Ser105.

Belongs to the eukaryotic ribosomal protein P1/P2 family. Heterodimer with RPLP1 at the lateral ribosomal stalk of the large ribosomal subunit.

Its function is as follows. Plays an important role in the elongation step of protein synthesis. This Equus caballus (Horse) protein is Large ribosomal subunit protein P2 (RPLP2).